The following is a 407-amino-acid chain: Putative replication protein A (407 aa).

It belongs to the ParA family.

This chain is Putative replication protein A, found in Sinorhizobium fredii (strain NBRC 101917 / NGR234).